The chain runs to 592 residues: MIESSSFMKKTSSENSIGSRSNIHEASTFSSEHENGDQSLTISQIVIRSDFANETSERQSKIILERFNEGIKNTAFTDSPVLGRAQPRLDVSYFAMAHRNQIVELFDPRGQRFGTVYSADPTVEIRYLGSVAKTCRYFGSFGKHVLNVPSGHFAKAMTKNRPIIYGEGPHVIIDPTFEFDERYGFVNQQEPFINHSTINILRVPSGKVAKVWIGTQPLILESRREPYVFVDAQFKMVEDTSESGNNKYFKNSSATFMEHGSIKRIIPHTGEVAITYNNGILTIIPPPKDGKPVIIDSPTHNFEGFIQTSLQTCLFPSKETKQQAIKDNKNATSDEVNLKIFQTRDSLRVGVVLVVAFRIVDPEIALTKLGKEGIINHIENVSFADMGKAIQLSTLQEIMYFNDTKPSANSTNETVHTIQDRVKSHLARDLCEYGIELARLQIETMKVLDSEIAKKLAGQSVTSAEFTTKQATLVKEYDIKTTEARLKAETDNIALEQKGKAIIAEAQAKLESAQKQAQALLITAEAQKKVQEMQGELFTKYPILAEIELAKIKSEALKSATLYITPQDAGNFMNSPLVYMDRLLGHQQKLEK.

The span at 1–30 (MIESSSFMKKTSSENSIGSRSNIHEASTFS) shows a compositional bias: polar residues. The interval 1-35 (MIESSSFMKKTSSENSIGSRSNIHEASTFSSEHEN) is disordered. A coiled-coil region spans residues 480 to 534 (KTTEARLKAETDNIALEQKGKAIIAEAQAKLESAQKQAQALLITAEAQKKVQEMQ). Positions 491-555 (DNIALEQKGK…EIELAKIKSE (65 aa)) are oligomerization domain.

This sequence belongs to the vacuolin family. As to quaternary structure, homotrimer.

It is found in the endosome membrane. The protein resides in the lysosome membrane. Functionally, negative regulator of late steps of the endocytic pathway. The protein is Vacuolin-B (vacB) of Dictyostelium discoideum (Social amoeba).